Reading from the N-terminus, the 885-residue chain is Chitobiase (885 aa).

The signal sequence occupies residues 1–27 (MNAFKLSALARLTATMGFLGGMGSAMA). 3 disulfides stabilise this stretch: Cys56/Cys66, Cys400/Cys408, and Cys505/Cys578. Glu540 acts as the Proton donor in catalysis. Positions 866-885 (EVQVRSVSPDGKRYSRAEKV) are disordered. The segment covering 875–885 (DGKRYSRAEKV) has biased composition (basic and acidic residues).

It belongs to the glycosyl hydrolase 20 family. As to quaternary structure, monomer.

Its subcellular location is the periplasm. The catalysed reaction is Hydrolysis of terminal non-reducing N-acetyl-D-hexosamine residues in N-acetyl-beta-D-hexosaminides.. It participates in glycan degradation; chitin degradation. In terms of biological role, digests the beta-1,4-glycosidic bonds in N-acetylglucosamine (GlcNAc) oligomers (mainly dimers). This Serratia marcescens protein is Chitobiase (chb).